Here is a 520-residue protein sequence, read N- to C-terminus: MAISNKQKAAIAAIVLVGGVATGGVLLSGRSAPEEQGGHSESKGHGDTEHHGKQAAEADHKDDKSHGDGEHHEVKKGPNGGALFSRDGYDVEIGTAESKGEARIRLWVSKSGKAVANGVAATGQLVRATGESQALKFVVSGDALESQQPVAEPHVFDVTANVTLPGSSSPLAVRLSKEEGKIELTADQLAKTGVVVQTAGSAKVQAGVQFPGEIRFNEDKTAHVVPRLAGVVESVPANIGQQVKKGQVLAVIASTGLSDQRSELLAAQKRLDLARVTYDREKKLWEQKISAEQDYLSARNALQEAQISVQNAQQKLTAIGASNSSTALNRYELRAPFDGMIVEKHISLGEAVADNANVFTLSDLSSVWAEFVVSAKDVERVRIGEKASINSASSDVKADGTVSYVGSLLGEQTRTAKARVTLTNPQMAWRPGLFVTVDVFGADVEVPVAVKTEAVQDVNGESVVFVAVQGGFVPQPVKVGRTNGKVIEIVEGLKPGARYAAANSFVLKAELGKSSAEHGH.

Residues 9–29 (AAIAAIVLVGGVATGGVLLSG) form a helical membrane-spanning segment. The interval 28-85 (SGRSAPEEQGGHSESKGHGDTEHHGKQAAEADHKDDKSHGDGEHHEVKKGPNGGALFS) is disordered. Basic and acidic residues predominate over residues 32–76 (APEEQGGHSESKGHGDTEHHGKQAAEADHKDDKSHGDGEHHEVKK). Positions 286–320 (EQKISAEQDYLSARNALQEAQISVQNAQQKLTAIG) form a coiled coil.

This sequence belongs to the membrane fusion protein (MFP) (TC 8.A.1) family.

It is found in the cell inner membrane. In terms of biological role, czcA and CzcB together would act in zinc efflux nearly as effectively as the complete czc efflux system (CzcABC). The CzcB protein is thought to funnel zinc cations to the CzcA transport protein. The protein is Cobalt-zinc-cadmium resistance protein CzcB (czcB) of Cupriavidus metallidurans (strain ATCC 43123 / DSM 2839 / NBRC 102507 / CH34) (Ralstonia metallidurans).